Reading from the N-terminus, the 883-residue chain is Integrator complex subunit 6-A (883 aa).

The region spanning 3–227 is the VWFA domain; it reads ILLFLLDTSA…QCLESLVQKV (225 aa). The Inhibitory loop signature appears at 626-633; it reads MMIDEADE.

The protein belongs to the Integrator subunit 6 family. Component of the Integrator complex, composed of core subunits INTS1, INTS2, INTS3, INTS4, INTS5, INTS6, INTS7, INTS8, INTS9/RC74, INTS10, INTS11/CPSF3L, INTS12, INTS13, INTS14 and INTS15. The core complex associates with protein phosphatase 2A subunits PPP2CA and PPP2R1A, to form the Integrator-PP2A (INTAC) complex.

The protein localises to the nucleus. It is found in the chromosome. Component of the integrator complex, a multiprotein complex that terminates RNA polymerase II (Pol II) transcription in the promoter-proximal region of genes. The integrator complex provides a quality checkpoint during transcription elongation by driving premature transcription termination of transcripts that are unfavorably configured for transcriptional elongation: the complex terminates transcription by (1) catalyzing dephosphorylation of the C-terminal domain (CTD) of Pol II subunit POLR2A/RPB1 and SUPT5H/SPT5, (2) degrading the exiting nascent RNA transcript via endonuclease activity and (3) promoting the release of Pol II from bound DNA. The integrator complex is also involved in terminating the synthesis of non-coding Pol II transcripts, such as enhancer RNAs (eRNAs), small nuclear RNAs (snRNAs), telomerase RNAs and long non-coding RNAs (lncRNAs). Within the integrator complex, INTS6 acts as a molecular adapter that promotes assembly of protein phosphatase 2A (PP2A) subunits to the integrator core complex, promoting recruitment of PP2A to transcription pause-release checkpoint. The sequence is that of Integrator complex subunit 6-A (ints6-a) from Xenopus laevis (African clawed frog).